Consider the following 130-residue polypeptide: Phosphoribosyl-AMP cyclohydrolase (130 aa).

Asp80 is a binding site for Mg(2+). Position 81 (Cys81) interacts with Zn(2+). Positions 82 and 84 each coordinate Mg(2+). Cys98 and Cys105 together coordinate Zn(2+).

The protein belongs to the PRA-CH family. In terms of assembly, homodimer. Mg(2+) serves as cofactor. Requires Zn(2+) as cofactor.

The protein resides in the cytoplasm. It catalyses the reaction 1-(5-phospho-beta-D-ribosyl)-5'-AMP + H2O = 1-(5-phospho-beta-D-ribosyl)-5-[(5-phospho-beta-D-ribosylamino)methylideneamino]imidazole-4-carboxamide. It functions in the pathway amino-acid biosynthesis; L-histidine biosynthesis; L-histidine from 5-phospho-alpha-D-ribose 1-diphosphate: step 3/9. In terms of biological role, catalyzes the hydrolysis of the adenine ring of phosphoribosyl-AMP. This chain is Phosphoribosyl-AMP cyclohydrolase, found in Oleidesulfovibrio alaskensis (strain ATCC BAA-1058 / DSM 17464 / G20) (Desulfovibrio alaskensis).